Reading from the N-terminus, the 302-residue chain is Elongation factor Ts (302 aa).

Residues 82–85 (TDFV) are involved in Mg(2+) ion dislocation from EF-Tu.

The protein belongs to the EF-Ts family.

It localises to the cytoplasm. Functionally, associates with the EF-Tu.GDP complex and induces the exchange of GDP to GTP. It remains bound to the aminoacyl-tRNA.EF-Tu.GTP complex up to the GTP hydrolysis stage on the ribosome. The protein is Elongation factor Ts of Nitrosospira multiformis (strain ATCC 25196 / NCIMB 11849 / C 71).